A 501-amino-acid chain; its full sequence is Oxygen-independent coproporphyrinogen-III oxidase-like protein HemZ (501 aa).

The Radical SAM core domain maps to 163 to 405; sequence DLYRVKDEVS…VAWTKEHGYV (243 aa). Tyr-174 lines the S-adenosyl-L-methionine pocket. [4Fe-4S] cluster contacts are provided by Cys-180 and Cys-184. Tyr-186 serves as a coordination point for S-adenosyl-L-methionine. Cys-187 serves as a coordination point for [4Fe-4S] cluster. S-adenosyl-L-methionine contacts are provided by residues Gly-233, 234 to 235, Glu-267, Gln-295, Arg-307, and Asp-332; that span reads GT.

Belongs to the anaerobic coproporphyrinogen-III oxidase family. HemZ subfamily. The cofactor is [4Fe-4S] cluster.

It participates in porphyrin-containing compound metabolism; protoporphyrin-IX biosynthesis. Involved in the biosynthesis of porphyrin-containing compound. This chain is Oxygen-independent coproporphyrinogen-III oxidase-like protein HemZ (hemZ), found in Bacillus subtilis (strain 168).